The following is a 107-amino-acid chain: High mobility group protein HMG-I/HMG-Y (107 aa).

Positions 1–13 are enriched in polar residues; sequence MSESVSKSSQPLA. Residues 1 to 107 are disordered; it reads MSESVSKSSQ…ISQESSEEEQ (107 aa). An N-acetylserine modification is found at S2. Residue K7 is modified to N6-acetyllysine. Position 8 is an ADP-ribosylserine (S8). At S9 the chain carries ADP-ribosylserine; alternate. S9 is modified (phosphoserine; alternate). At K15 the chain carries N6-acetyllysine; alternate. A Glycyl lysine isopeptide (Lys-Gly) (interchain with G-Cter in SUMO2); alternate cross-link involves residue K15. Over residues 15–24 the composition is skewed to basic and acidic residues; that stretch reads KQEKDGTEKR. The segment at residues 21–31 is a DNA-binding region (a.T hook 1); sequence TEKRGRGRPRK. R26 bears the Asymmetric dimethylarginine; alternate mark. An Omega-N-methylarginine; alternate modification is found at R26. Residue R26 is modified to Symmetric dimethylarginine; alternate. Position 36 is a phosphoserine; by HIPK2 and CDC2 (S36). T39 carries the post-translational modification Phosphothreonine. A phosphoserine mark is found at S44 and S49. T53 is subject to Phosphothreonine; by HIPK2 and CDC2. 2 DNA-binding regions (a.T hook) span residues 53–63 and 78–89; these read TPKRPRGRPKG and TPGRKPRGRPKK. Residues 53–77 are interaction with HIPK2; it reads TPKRPRGRPKGSKNKGTAKTRKVTT. A compositionally biased stretch (basic residues) spans 55 to 74; sequence KRPRGRPKGSKNKGTAKTRK. An asymmetric dimethylarginine; by PRMT6; alternate mark is found at R58 and R60. An omega-N-methylarginine; by PRMT6; alternate mark is found at R58 and R60. Residue T78 is modified to Phosphothreonine; by HIPK2 and CDC2. Over residues 93-107 the composition is skewed to acidic residues; that stretch reads EEEEGISQESSEEEQ. S99, S102, and S103 each carry phosphoserine.

The protein belongs to the HMGA family. As to quaternary structure, interacts with HIPK2. Isoforms HMG-I and HMG-Y can be phosphorylated by HIPK2. Phosphorylation may modulate DNA-binding affinity. In terms of processing, methylation at Arg-58 is mutually exclusive with methylation at Arg-60.

Its subcellular location is the nucleus. The protein localises to the chromosome. In terms of biological role, HMG-I/Y bind preferentially to the minor groove of A+T rich regions in double-stranded DNA. It is suggested that these proteins could function in nucleosome phasing and in the 3'-end processing of mRNA transcripts. They are also involved in the transcription regulation of genes containing, or in close proximity to A+T-rich regions. This is High mobility group protein HMG-I/HMG-Y (Hmga1) from Rattus norvegicus (Rat).